The primary structure comprises 185 residues: Ribosome-recycling factor (185 aa).

It belongs to the RRF family.

Its subcellular location is the cytoplasm. Responsible for the release of ribosomes from messenger RNA at the termination of protein biosynthesis. May increase the efficiency of translation by recycling ribosomes from one round of translation to another. This Streptococcus uberis (strain ATCC BAA-854 / 0140J) protein is Ribosome-recycling factor.